The following is a 453-amino-acid chain: Trypanin (453 aa).

A compositionally biased stretch (basic and acidic residues) spans 1–10 (MPPRTAAERG). A disordered region spans residues 1 to 22 (MPPRTAAERGGRRKSVKAPPPV). Coiled-coil stretches lie at residues 60-156 (TITK…EMNV) and 185-377 (SCEA…LVEE).

It belongs to the DRC4 family.

It is found in the cytoplasm. It localises to the cytoskeleton. The protein localises to the cell projection. Its subcellular location is the cilium. The protein resides in the flagellum. In terms of biological role, cytoskeletal linker that plays a central role in the flagellum cell motility. Required for directional cell motility. Plays a role as part of a dynein regulatory system that regulates flagellar beat in response to signals from the central pair apparatus and radial spokes in procyclic cells. Also plays an essential role in the bloodstream form of the trypanosomes as its silencing is lethal for the circulating form. This is Trypanin from Trypanosoma brucei rhodesiense.